We begin with the raw amino-acid sequence, 722 residues long: Putative tyrosine-protein kinase in cps region (722 aa).

2 consecutive transmembrane segments (helical) span residues 31–53 and 427–449; these read IIIA…ATPI and IVVL…VRIL.

Belongs to the etk/wzc family. In terms of processing, autophosphorylated on tyrosine residue(s).

It is found in the cell inner membrane. It catalyses the reaction L-tyrosyl-[protein] + ATP = O-phospho-L-tyrosyl-[protein] + ADP + H(+). It functions in the pathway glycan metabolism; exopolysaccharide biosynthesis. The protein is Putative tyrosine-protein kinase in cps region of Klebsiella pneumoniae.